Consider the following 43-residue polypeptide: Protein PsbN (43 aa).

A helical membrane pass occupies residues 5–27 (TLVTIFISGSLVSFTGYALYTAF).

Belongs to the PsbN family.

Its subcellular location is the plastid. The protein localises to the chloroplast thylakoid membrane. Functionally, may play a role in photosystem I and II biogenesis. This is Protein PsbN from Piper cenocladum (Ant piper).